Consider the following 414-residue polypeptide: Serine/threonine transporter SstT (414 aa).

Topologically, residues 2–15 (TTQHSPGLFRRLAH) are cytoplasmic. A helical membrane pass occupies residues 16 to 36 (GSLVKQILAGLILGILLAWIS). At 37–45 (KPAAEAVGL) the chain is on the periplasmic side. The helical transmembrane segment at 46–66 (LGTLFVGALKAVAPILVLMLV) threads the bilayer. Residues 67–83 (MASIANHQHGQKTNIRP) lie on the Cytoplasmic side of the membrane. The helical transmembrane segment at 84-104 (ILFLYLLGTFSAALAAVIFSF) threads the bilayer. The Periplasmic portion of the chain corresponds to 105–142 (AFPSTLHLSSSAGDISPPSGIVEVMRGLVMSMVSNPID). The helical transmembrane segment at 143–163 (ALLKGNYIGILVWAIGLGFAL) threads the bilayer. Topologically, residues 164 to 179 (RHGNETTKNLVNDMSN) are cytoplasmic. Residues 180–200 (AVTFMVKLVIHFAPIGIFGLV) traverse the membrane as a helical segment. The Periplasmic segment spans residues 201–217 (SSTLATTGFSTLWGYAQ). The chain crosses the membrane as a helical span at residues 218 to 238 (LLVVLVGCMLLVALVVNPLLV). Residues 239-299 (WWKIRRNPFP…VSIPLGATIN (61 aa)) lie on the Cytoplasmic side of the membrane. The chain crosses the membrane as a helical span at residues 300–320 (MAGAAITITVLTLAAVNTLGI). At 321–331 (PVDLPTALLLS) the chain is on the periplasmic side. The chain crosses the membrane as a helical span at residues 332-352 (VVASLCACGASGVAGGSLLLI). Residues 353–414 (PLACNMFGIS…DRLANSALRN (62 aa)) lie on the Cytoplasmic side of the membrane.

Belongs to the dicarboxylate/amino acid:cation symporter (DAACS) (TC 2.A.23) family.

The protein resides in the cell inner membrane. It carries out the reaction L-serine(in) + Na(+)(in) = L-serine(out) + Na(+)(out). The enzyme catalyses L-threonine(in) + Na(+)(in) = L-threonine(out) + Na(+)(out). In terms of biological role, involved in the import of serine and threonine into the cell, with the concomitant import of sodium (symport system). This Escherichia coli (strain UTI89 / UPEC) protein is Serine/threonine transporter SstT.